The primary structure comprises 55 residues: ATP synthase F(0) complex subunit 8 (55 aa).

Residues 7–29 (NPWFYIMLMSWLTFSLIIQPELL) traverse the membrane as a helical segment.

Belongs to the ATPase protein 8 family. As to quaternary structure, component of the ATP synthase complex composed at least of ATP5F1A/subunit alpha, ATP5F1B/subunit beta, ATP5MC1/subunit c (homooctomer), MT-ATP6/subunit a, MT-ATP8/subunit 8, ATP5ME/subunit e, ATP5MF/subunit f, ATP5MG/subunit g, ATP5MK/subunit k, ATP5MJ/subunit j, ATP5F1C/subunit gamma, ATP5F1D/subunit delta, ATP5F1E/subunit epsilon, ATP5PF/subunit F6, ATP5PB/subunit b, ATP5PD/subunit d, ATP5PO/subunit OSCP. ATP synthase complex consists of a soluble F(1) head domain (subunits alpha(3) and beta(3)) - the catalytic core - and a membrane F(0) domain - the membrane proton channel (subunits c, a, 8, e, f, g, k and j). These two domains are linked by a central stalk (subunits gamma, delta, and epsilon) rotating inside the F1 region and a stationary peripheral stalk (subunits F6, b, d, and OSCP).

It is found in the mitochondrion membrane. In terms of biological role, subunit 8, of the mitochondrial membrane ATP synthase complex (F(1)F(0) ATP synthase or Complex V) that produces ATP from ADP in the presence of a proton gradient across the membrane which is generated by electron transport complexes of the respiratory chain. ATP synthase complex consist of a soluble F(1) head domain - the catalytic core - and a membrane F(1) domain - the membrane proton channel. These two domains are linked by a central stalk rotating inside the F(1) region and a stationary peripheral stalk. During catalysis, ATP synthesis in the catalytic domain of F(1) is coupled via a rotary mechanism of the central stalk subunits to proton translocation. In vivo, can only synthesize ATP although its ATP hydrolase activity can be activated artificially in vitro. Part of the complex F(0) domain. This Musophaga violacea (Violet turaco) protein is ATP synthase F(0) complex subunit 8.